We begin with the raw amino-acid sequence, 147 residues long: Hemoglobin subunit gamma-1 (147 aa).

The Globin domain occupies 3–147; sequence NFTAEDKAAI…VASALGSRYH (145 aa). Threonine 13 carries the post-translational modification Phosphothreonine. 3 positions are modified to phosphoserine: serine 45, serine 51, and serine 53. The residue at position 60 (lysine 60) is an N6-acetyllysine. Histidine 64 is a binding site for heme b. At lysine 83 the chain carries N6-acetyllysine. Heme b is bound at residue histidine 93. The residue at position 94 (cysteine 94) is an S-nitrosocysteine. Serine 140 is modified (phosphoserine).

Belongs to the globin family. Heterotetramer of two alpha chains and two gamma chains in fetal hemoglobin (Hb F). Red blood cells.

Gamma chains make up the fetal hemoglobin F, in combination with alpha chains. This is Hemoglobin subunit gamma-1 (HBG1) from Plecturocebus moloch (Dusky titi monkey).